The sequence spans 150 residues: uncharacterized protein (150 aa).

An N-terminal signal peptide occupies residues 1 to 28; it reads MPLDVWIAFSYFIDFFQWLFMLNAEVMR.

This is an uncharacterized protein from Archaeoglobus fulgidus (strain ATCC 49558 / DSM 4304 / JCM 9628 / NBRC 100126 / VC-16).